Reading from the N-terminus, the 256-residue chain is MSQEQPRRPREPVKYGDVFEVSGELADKPIAPEDAKMMQSAETHVFGHTQKGGPAAVMQSAATTNIRGGFVHPDDKTELVAERGATVEQTVPAATVTTEFVGGQVVGQHVEPRRVVAAARTDEEALQSTITIGEALEATVKTAGNKPVDQSDAAAIQAAEMRASGTNVIALAGVAASAQSAADHNATVDRDERKIKLRDVLTGAAGKLSADRAVTREDAEGVVSAEMRNNPKLCTHPGGVAASLTVAARLNERVDI.

The segment covering 1 to 14 (MSQEQPRRPREPVK) has biased composition (basic and acidic residues). Residues 1–20 (MSQEQPRRPREPVKYGDVFE) form a disordered region. Residues 5 to 9 (QPRRP) carry the Nuclear localization signal (NLS) motif. SMP domains lie at 13 to 66 (VKYG…TTNI), 130 to 187 (ITIG…HNAT), and 195 to 253 (IKLR…LNER).

The protein belongs to the LEA type SMP family. As to expression, embryo specific, only in dry mature seeds. Expressed at low levels.

Its subcellular location is the cytoplasm. It is found in the nucleus. In terms of biological role, LEA proteins are late embryonic proteins abundant in higher plant seed embryos. The function of those proteins is not known. The polypeptide is Late embryogenesis abundant protein 32 (Arabidopsis thaliana (Mouse-ear cress)).